Here is a 777-residue protein sequence, read N- to C-terminus: Glucocorticoid receptor (777 aa).

Residues 1-14 (MDSKESLTPGKEEN) show a composition bias toward basic and acidic residues. Positions 1 to 22 (MDSKESLTPGKEENPSSVLTQE) are disordered. The interval 1–420 (MDSKESLTPG…TATTGPPPKL (420 aa)) is modulating. Thr-8 carries the post-translational modification Phosphothreonine. Position 23 is an omega-N-methylarginine (Arg-23). Phosphoserine occurs at positions 45, 113, 134, and 141. The segment at 130–183 (NRSTSVPENPKSSASSSVSAAPKEKEFPKTHSDVSSEQQNLKGQTGTNGGNAKL) is disordered. Residues 134 to 150 (SVPENPKSSASSSVSAA) are compositionally biased toward low complexity. A compositionally biased stretch (basic and acidic residues) spans 151–163 (PKEKEFPKTHSDV). The segment covering 164-174 (SSEQQNLKGQT) has biased composition (polar residues). 3 positions are modified to phosphoserine: Ser-203, Ser-211, and Ser-226. Lys-258 is covalently cross-linked (Glycyl lysine isopeptide (Lys-Gly) (interchain with G-Cter in SUMO2)). The residue at position 267 (Ser-267) is a Phosphoserine. Residues Lys-277 and Lys-293 each participate in a glycyl lysine isopeptide (Lys-Gly) (interchain with G-Cter in SUMO); alternate cross-link. Residues Lys-277 and Lys-293 each participate in a glycyl lysine isopeptide (Lys-Gly) (interchain with G-Cter in SUMO2); alternate cross-link. Positions 394-414 (SSPSMRPDVSSPPSSSSTATT) are enriched in low complexity. The segment at 394-415 (SSPSMRPDVSSPPSSSSTATTG) is disordered. Residue Ser-404 is modified to Phosphoserine. A Glycyl lysine isopeptide (Lys-Gly) (interchain with G-Cter in ubiquitin) cross-link involves residue Lys-419. 2 consecutive NR C4-type zinc fingers follow at residues 421–441 (CLVC…CGSC) and 457–481 (CAGR…YRKC). The segment at residues 421–486 (CLVCSDEASG…RYRKCLQAGM (66 aa)) is a DNA-binding region (nuclear receptor). An N6-acetyllysine mark is found at Lys-480, Lys-492, Lys-494, and Lys-495. Residues 485–777 (GMNLEARKTK…NIRKLLFHQK (293 aa)) are interaction with CLOCK. A hinge region spans residues 487–523 (NLEARKTKKKIKGIQQATTGVSQETSENPANKTIVPA). An NR LBD domain is found at 524-758 (TLPQLTPTLV…FPEMLAEIIT (235 aa)). Residues 532–697 (LVSLLEVIEP…EIRMTYIKEL (166 aa)) are interaction with CRY1. A Glycyl lysine isopeptide (Lys-Gly) (interchain with G-Cter in SUMO) cross-link involves residue Lys-703.

It belongs to the nuclear hormone receptor family. NR3 subfamily. As to quaternary structure, heteromultimeric cytoplasmic complex with HSP90AA1, HSPA1A/HSPA1B, and FKBP5 or another immunophilin such as PPID, STIP1, or the immunophilin homolog PPP5C. Upon ligand binding FKBP5 dissociates from the complex and FKBP4 takes its place, thereby linking the complex to dynein and mediating transport to the nucleus, where the complex dissociates. Probably forms a complex composed of chaperones HSP90 and HSP70, co-chaperones CDC37, PPP5C, TSC1 and client protein TSC2, CDK4, AKT, RAF1 and NR3C1; this complex does not contain co-chaperones STIP1/HOP and PTGES3/p23. Directly interacts with UNC45A. Binds to DNA as a homodimer, and as heterodimer with NR3C2 or the retinoid X receptor. Binds STAT5A and STAT5B homodimers and heterodimers. Interacts with NRIP1, POU2F1, POU2F2 and TRIM28. Interacts with several coactivator complexes, including the SMARCA4 complex, CREBBP/EP300, TADA2L (Ada complex) and p160 coactivators such as NCOA2 and NCOA6. Interaction with BAG1 inhibits transactivation. Interacts with HEXIM1 and TGFB1I1. Interacts with NCOA1. Interacts with NCOA3, SMARCA4, SMARCC1, SMARCD1, and SMARCE1. Interacts with CLOCK, CRY1 and CRY2 in a ligand-dependent fashion. Interacts with CIART. Interacts with RWDD3. Interacts with UBE2I/UBC9 and this interaction is enhanced in the presence of RWDD3. Interacts with GRIP1. Interacts with NR4A3 (via nuclear receptor DNA-binding domain), represses transcription activity of NR4A3 on the POMC promoter Nur response element (NurRE). Directly interacts with PNRC2 to attract and form a complex with UPF1 and DCP1A; the interaction leads to rapid mRNA degradation. Interacts with GSK3B. Interacts with FNIP1 and FNIP2. Interacts (via C-terminus) with HNRNPU (via C-terminus). Interacts with MCM3AP. Interacts (via domain NR LBD) with HSP90AA1 and HSP90AB1. In the absence of hormonal ligand, interacts with TACC1. Interacts (via NR LBD domain) with ZNF764 (via KRAB domain); the interaction regulates transcription factor activity of NR3C1 by directing its actions toward certain biologic pathways. Post-translationally, acetylation by CLOCK reduces its binding to glucocorticoid response elements and its transcriptional activity. Increased proteasome-mediated degradation in response to glucocorticoids. In terms of processing, phosphorylated in the absence of hormone; becomes hyperphosphorylated in the presence of glucocorticoid. The Ser-203, Ser-226 and Ser-404-phosphorylated forms are mainly cytoplasmic, and the Ser-211-phosphorylated form is nuclear. Phosphorylation at Ser-211 increases transcriptional activity. Phosphorylation at Ser-203, Ser-226 and Ser-404 decreases signaling capacity. Phosphorylation at Ser-404 may protect from glucocorticoid-induced apoptosis. Phosphorylation at Ser-203 and Ser-211 is not required in regulation of chromosome segregation. May be dephosphorylated by PPP5C, attenuates NR3C1 action. Post-translationally, ubiquitinated by UBR5, leading to its degradation: UBR5 specifically recognizes and binds ligand-bound NR3C1 when it is not associated with coactivators (NCOAs). In presence of NCOAs, the UBR5-degron is not accessible, preventing its ubiquitination and degradation. Sumoylation at Lys-277 and Lys-293 negatively regulates its transcriptional activity. Sumoylation at Lys-703 positively regulates its transcriptional activity in the presence of RWDD3. Sumoylation at Lys-277 and Lys-293 is dispensable whereas sumoylation at Lys-703 is critical for the stimulatory effect of RWDD3 on its transcriptional activity. Heat shock increases sumoylation in a RWDD3-dependent manner.

The protein localises to the cytoplasm. The protein resides in the nucleus. It is found in the mitochondrion. It localises to the cytoskeleton. Its subcellular location is the spindle. The protein localises to the microtubule organizing center. The protein resides in the centrosome. It is found in the chromosome. It localises to the nucleoplasm. Functionally, receptor for glucocorticoids (GC). Has a dual mode of action: as a transcription factor that binds to glucocorticoid response elements (GRE), both for nuclear and mitochondrial DNA, and as a modulator of other transcription factors. Affects inflammatory responses, cellular proliferation and differentiation in target tissues. Involved in chromatin remodeling. Plays a role in rapid mRNA degradation by binding to the 5' UTR of target mRNAs and interacting with PNRC2 in a ligand-dependent manner which recruits the RNA helicase UPF1 and the mRNA-decapping enzyme DCP1A, leading to RNA decay. Could act as a coactivator for STAT5-dependent transcription upon growth hormone (GH) stimulation and could reveal an essential role of hepatic GR in the control of body growth. Mediates glucocorticoid-induced apoptosis. Promotes accurate chromosome segregation during mitosis. May act as a tumor suppressor. May play a negative role in adipogenesis through the regulation of lipolytic and antilipogenic gene expression. The protein is Glucocorticoid receptor (NR3C1) of Saguinus oedipus (Cotton-top tamarin).